Here is a 530-residue protein sequence, read N- to C-terminus: Cytochrome P450 monooxygenase sttB (530 aa).

Asn5 carries N-linked (GlcNAc...) asparagine glycosylation. Residues 24–44 (LPILTVALLTGIASAVYINVS) form a helical membrane-spanning segment. Asn230 is a glycosylation site (N-linked (GlcNAc...) asparagine).

It belongs to the cytochrome P450 family. It depends on heme as a cofactor.

Its subcellular location is the membrane. It carries out the reaction preaspterpenacid acid I + reduced [NADPH--hemoprotein reductase] + O2 = preaspterpenacid acid II + oxidized [NADPH--hemoprotein reductase] + H2O + H(+). Its pathway is secondary metabolite biosynthesis; terpenoid biosynthesis. Cytochrome P450 monooxygenase; part of the gene cluster that mediates the biosynthesis of aspterpenacids. Performs the C22-oxidative modification of the terpene synthase sttA product preaspterpenacid I to produce preaspterpenacid II. It has still to be determined how preaspterpenacid II is further modified to produce aspterpenacids. The sequence is that of Cytochrome P450 monooxygenase sttB from Aspergillus terreus (strain NIH 2624 / FGSC A1156).